A 331-amino-acid chain; its full sequence is UBX domain-containing protein 2B (331 aa).

Basic and acidic residues-rich tracts occupy residues 1–16 and 37–48; these read MAEG…ERGS and DEMKCKSSKPDR. Residues 1-70 form a disordered region; it reads MAEGGRAEPE…PHRLYSGDHK (70 aa). Position 2 is an N-acetylalanine (alanine 2). Serine 56 carries the post-translational modification Phosphoserine. Threonine 59 is subject to Phosphothreonine. At serine 66 the chain carries Phosphoserine. Residues 141 to 206 enclose the SEP domain; the sequence is DVQVLLKLWR…MEDHQDQEYI (66 aa). Serine 231, serine 234, and serine 235 each carry phosphoserine. One can recognise a UBX domain in the interval 252–329; it reads DSMPTTKIQI…DILNTVILQQ (78 aa).

The protein belongs to the NSFL1C family. In terms of assembly, interacts with VCP. Does not bind ubiquitin.

The protein localises to the nucleus. It localises to the cytoplasm. The protein resides in the cytosol. It is found in the endoplasmic reticulum. Its subcellular location is the golgi apparatus. The protein localises to the cytoskeleton. It localises to the microtubule organizing center. The protein resides in the centrosome. Functionally, adapter protein required for Golgi and endoplasmic reticulum biogenesis. Involved in Golgi and endoplasmic reticulum maintenance during interphase and in their reassembly at the end of mitosis. The complex formed with VCP has membrane fusion activity; membrane fusion activity requires USO1-GOLGA2 tethering and BET1L. VCPIP1 is also required, but not its deubiquitinating activity. Together with NSFL1C/p47, regulates the centrosomal levels of kinase AURKA/Aurora A during mitotic progression by promoting AURKA removal from centrosomes in prophase. Also, regulates spindle orientation during mitosis. The sequence is that of UBX domain-containing protein 2B (Ubxn2b) from Mus musculus (Mouse).